We begin with the raw amino-acid sequence, 190 residues long: UPF0301 protein Rmet_2743 (190 aa).

Belongs to the UPF0301 (AlgH) family.

In Cupriavidus metallidurans (strain ATCC 43123 / DSM 2839 / NBRC 102507 / CH34) (Ralstonia metallidurans), this protein is UPF0301 protein Rmet_2743.